Consider the following 350-residue polypeptide: Dihydroorotase (350 aa).

The Zn(2+) site is built by His17 and His19. Substrate-binding positions include 19–21 and Asn45; that span reads HLR. Zn(2+) is bound by residues Lys103, His140, and His178. N6-carboxylysine is present on Lys103. A substrate-binding site is contributed by His140. Residue Leu223 coordinates substrate. Residue Asp251 participates in Zn(2+) binding. Asp251 is a catalytic residue. Substrate contacts are provided by His255 and Ala267.

Belongs to the metallo-dependent hydrolases superfamily. DHOase family. Class II DHOase subfamily. Homodimer. It depends on Zn(2+) as a cofactor.

The catalysed reaction is (S)-dihydroorotate + H2O = N-carbamoyl-L-aspartate + H(+). It functions in the pathway pyrimidine metabolism; UMP biosynthesis via de novo pathway; (S)-dihydroorotate from bicarbonate: step 3/3. In terms of biological role, catalyzes the reversible cyclization of carbamoyl aspartate to dihydroorotate. The sequence is that of Dihydroorotase from Erwinia tasmaniensis (strain DSM 17950 / CFBP 7177 / CIP 109463 / NCPPB 4357 / Et1/99).